Here is a 26-residue protein sequence, read N- to C-terminus: GTP-binding protein Rheb (26 aa).

GTP is bound by residues S1, S2, V13, Y16, and T19. Residue S1 participates in Mg(2+) binding. An Effector region motif is present at residues 16–24; that stretch reads YDPTIENTF. A Mg(2+)-binding site is contributed by T19.

The protein belongs to the small GTPase superfamily. Rheb family.

It carries out the reaction GTP + H2O = GDP + phosphate + H(+). Binds GTP and exhibits intrinsic GTPase activity. The polypeptide is GTP-binding protein Rheb (Crocodylus siamensis (Siamese crocodile)).